Consider the following 65-residue polypeptide: Movement protein TGBp3 (65 aa).

Residues 1 to 3 lie on the Lumenal side of the membrane; that stretch reads MQA. A helical membrane pass occupies residues 4 to 24; that stretch reads SGLILVALFSAVVSYLALLHL. The Cytoplasmic segment spans residues 25-65; that stretch reads SSSSSSCVVVVTGESFRISGCDFTEEFIGFAKTLRVANSQP.

Belongs to the Tymovirales TGBp3 protein family.

The protein localises to the host endoplasmic reticulum membrane. Its function is as follows. Plays a role in viral cell-to-cell propagation, by facilitating genome transport to neighboring plant cells through plasmosdesmata. May induce the formation of granular vesicles derived from the Endoplasmic reticulum, which align on actin filaments. This chain is Movement protein TGBp3, found in Carnation latent virus (CLV).